The following is a 150-amino-acid chain: 3-dehydroquinate dehydratase (150 aa).

Tyr23 (proton acceptor) is an active-site residue. Substrate contacts are provided by Asn75, His81, and Asp88. His101 serves as the catalytic Proton donor. Residues 102–103 and Arg112 contribute to the substrate site; that span reads LS.

It belongs to the type-II 3-dehydroquinase family. In terms of assembly, homododecamer.

The catalysed reaction is 3-dehydroquinate = 3-dehydroshikimate + H2O. It functions in the pathway metabolic intermediate biosynthesis; chorismate biosynthesis; chorismate from D-erythrose 4-phosphate and phosphoenolpyruvate: step 3/7. Functionally, catalyzes a trans-dehydration via an enolate intermediate. This Pseudomonas savastanoi pv. phaseolicola (strain 1448A / Race 6) (Pseudomonas syringae pv. phaseolicola (strain 1448A / Race 6)) protein is 3-dehydroquinate dehydratase.